Reading from the N-terminus, the 261-residue chain is Leucine-rich repeat-containing protein 18 (261 aa).

LRR repeat units lie at residues 28 to 49, 51 to 72, 74 to 95, 97 to 118, 122 to 144, 145 to 167, and 168 to 189; these read GKKRLDLSKMGITTFPKCILRL, DMDELDLSRNLIRKIPDSISKF, NLRWLDLHSNYIDKLPESIGQM, SLLYLNVSNNRLTSNGLPVELK, NIRAVNLGLNHLDSVPTTLGALK, ELHEVGLHDNLLNNIPVSISKLP, and KLKKLNIKRNPFPKPGESEIFI.

It localises to the cytoplasm. May be involved in the regulation of spermatogenesis and sperm maturation. In Homo sapiens (Human), this protein is Leucine-rich repeat-containing protein 18 (LRRC18).